Consider the following 342-residue polypeptide: Probable dual-specificity RNA methyltransferase RlmN (342 aa).

The active-site Proton acceptor is the glutamate 91. Residues 97-327 (YKHGNSICVS…TTIRREMGAD (231 aa)) form the Radical SAM core domain. A disulfide bond links cysteine 104 and cysteine 332. [4Fe-4S] cluster-binding residues include cysteine 111, cysteine 115, and cysteine 118. S-adenosyl-L-methionine is bound by residues 158-159 (GE), serine 190, 213-215 (SLH), and asparagine 289. The active-site S-methylcysteine intermediate is the cysteine 332.

This sequence belongs to the radical SAM superfamily. RlmN family. [4Fe-4S] cluster serves as cofactor.

It is found in the cytoplasm. It carries out the reaction adenosine(2503) in 23S rRNA + 2 reduced [2Fe-2S]-[ferredoxin] + 2 S-adenosyl-L-methionine = 2-methyladenosine(2503) in 23S rRNA + 5'-deoxyadenosine + L-methionine + 2 oxidized [2Fe-2S]-[ferredoxin] + S-adenosyl-L-homocysteine. The enzyme catalyses adenosine(37) in tRNA + 2 reduced [2Fe-2S]-[ferredoxin] + 2 S-adenosyl-L-methionine = 2-methyladenosine(37) in tRNA + 5'-deoxyadenosine + L-methionine + 2 oxidized [2Fe-2S]-[ferredoxin] + S-adenosyl-L-homocysteine. In terms of biological role, specifically methylates position 2 of adenine 2503 in 23S rRNA and position 2 of adenine 37 in tRNAs. The polypeptide is Probable dual-specificity RNA methyltransferase RlmN (Clostridium botulinum (strain Okra / Type B1)).